The chain runs to 156 residues: SsrA-binding protein (156 aa).

Belongs to the SmpB family.

The protein localises to the cytoplasm. In terms of biological role, required for rescue of stalled ribosomes mediated by trans-translation. Binds to transfer-messenger RNA (tmRNA), required for stable association of tmRNA with ribosomes. tmRNA and SmpB together mimic tRNA shape, replacing the anticodon stem-loop with SmpB. tmRNA is encoded by the ssrA gene; the 2 termini fold to resemble tRNA(Ala) and it encodes a 'tag peptide', a short internal open reading frame. During trans-translation Ala-aminoacylated tmRNA acts like a tRNA, entering the A-site of stalled ribosomes, displacing the stalled mRNA. The ribosome then switches to translate the ORF on the tmRNA; the nascent peptide is terminated with the 'tag peptide' encoded by the tmRNA and targeted for degradation. The ribosome is freed to recommence translation, which seems to be the essential function of trans-translation. The polypeptide is SsrA-binding protein (Shouchella clausii (strain KSM-K16) (Alkalihalobacillus clausii)).